Here is a 114-residue protein sequence, read N- to C-terminus: Ribonuclease P protein component (114 aa).

The protein belongs to the RnpA family. In terms of assembly, consists of a catalytic RNA component (M1 or rnpB) and a protein subunit.

It carries out the reaction Endonucleolytic cleavage of RNA, removing 5'-extranucleotides from tRNA precursor.. RNaseP catalyzes the removal of the 5'-leader sequence from pre-tRNA to produce the mature 5'-terminus. It can also cleave other RNA substrates such as 4.5S RNA. The protein component plays an auxiliary but essential role in vivo by binding to the 5'-leader sequence and broadening the substrate specificity of the ribozyme. The protein is Ribonuclease P protein component of Lactiplantibacillus plantarum (strain ATCC BAA-793 / NCIMB 8826 / WCFS1) (Lactobacillus plantarum).